Reading from the N-terminus, the 966-residue chain is Regulator of telomere elongation helicase 1 homolog (966 aa).

Positions 7 to 284 constitute a Helicase ATP-binding domain; that stretch reads AGIPVHFPFE…QDMAGDEPKD (278 aa). Position 42 to 49 (42 to 49) interacts with ATP; sequence SPTGTGKT. The [4Fe-4S] cluster site is built by C146, C164, C173, and C209. Positions 233 to 236 match the DEAH box motif; sequence DEAH. The segment at 844 to 864 is disordered; sequence VKIHKRERSSPTAPESTSQVS. Residues 853–863 show a composition bias toward polar residues; that stretch reads SPTAPESTSQV. T855 is subject to Phosphothreonine.

The protein belongs to the helicase family. RAD3/XPD subfamily.

The protein localises to the nucleus. It carries out the reaction ATP + H2O = ADP + phosphate + H(+). A probable ATP-dependent DNA helicase implicated in DNA repair and the maintenance of genomic stability. Acts as an anti-recombinase to counteract toxic recombination and limit crossover during meiosis. Regulates meiotic recombination and crossover homeostasis by physically dissociating strand invasion events and thereby promotes noncrossover repair by meiotic synthesis dependent strand annealing (SDSA) as well as disassembly of D loop recombination intermediates. The polypeptide is Regulator of telomere elongation helicase 1 homolog (Drosophila sechellia (Fruit fly)).